The sequence spans 411 residues: Adherens junction-associated protein 1 (411 aa).

Residues 1–43 (MWIQQLLGLSSMSIRWPGRPLGSHAWILIAMFQLAVDLPACEA) form the signal peptide. The Extracellular segment spans residues 44–282 (LGPGPEFWLL…GEASGLAVHQ (239 aa)). Disordered regions lie at residues 89–108 (IHGQ…RDQA), 115–197 (AGLA…SNTF), and 239–268 (SLDP…VTQP). A compositionally biased stretch (low complexity) spans 115 to 146 (AGLAKPPAAAKSSPSLASSSSSSSSAVAGGAP). Over residues 166–178 (SFDSRGSRPTTET) the composition is skewed to polar residues. Over residues 247-263 (PGGVSTTEPSTSPSNNG) the composition is skewed to low complexity. A helical membrane pass occupies residues 283 to 303 (IITITVSLIMVIAALITTLVL). The targeting signals stretch occupies residues 303 to 411 (LKNCCAQSGN…VSEKWFEISC (109 aa)). Residues 304–411 (KNCCAQSGNT…VSEKWFEISC (108 aa)) lie on the Cytoplasmic side of the membrane. A disordered region spans residues 311-330 (GNTRRNSHQRKTNQQEESCQ).

In terms of assembly, forms a complex with CDH1 and CTNNB1; interacts directly with CTNNB1. Interacts with AP1M2. Interacts with isoform 2 of BSG/CD147. Post-translationally, thr-237 and Ser-239 may be phosphorylated; however as this position is probably extracellular, the in vivo relevance is not proven. Expressed in uterus and pancreas (at protein level).

The protein resides in the basolateral cell membrane. It localises to the apical cell membrane. The protein localises to the cell junction. Its subcellular location is the adherens junction. Functionally, plays a role in cell adhesion and cell migration. This chain is Adherens junction-associated protein 1 (AJAP1), found in Homo sapiens (Human).